We begin with the raw amino-acid sequence, 716 residues long: Calpain clp-4 (716 aa).

A disordered region spans residues 31-53 (DDDDKQEAPVAVSKAPKGKGSNH). The region spanning 240–536 (LFEDPEFPAT…FTQMEVCNLT (297 aa)) is the Calpain catalytic domain. Active-site residues include Cys-295, His-452, and Asn-476.

It belongs to the peptidase C2 family.

Functionally, calcium-regulated non-lysosomal thiol-protease which catalyzes limited proteolysis of substrates. Promotes starvation-induced muscle atrophy. The chain is Calpain clp-4 from Caenorhabditis elegans.